Reading from the N-terminus, the 193-residue chain is Ribosomal RNA small subunit methyltransferase G (193 aa).

S-adenosyl-L-methionine is bound by residues Gly-64, Leu-69, 113–114 (IE), and Arg-126.

This sequence belongs to the methyltransferase superfamily. RNA methyltransferase RsmG family.

The protein localises to the cytoplasm. The catalysed reaction is guanosine(527) in 16S rRNA + S-adenosyl-L-methionine = N(7)-methylguanosine(527) in 16S rRNA + S-adenosyl-L-homocysteine. Functionally, specifically methylates the N7 position of guanine in position 527 of 16S rRNA. In Rickettsia massiliae (strain Mtu5), this protein is Ribosomal RNA small subunit methyltransferase G.